We begin with the raw amino-acid sequence, 285 residues long: MLNHTERAEVLVHALPYIQRYRGKIIVVKYGGNAMISNELRETVINDIILMKCVGIEPIVVHGGGPDISDLLNRLNHKSEFINGLRYTDDITIEVVQMVLGGKVNKNLVSLIEKFGGKAIGLCGMDGSLLKAKKIESDNDLGYVGEITKVNTEILKTTISSGYIPVVGSVALGEDDNKAYNINADTCAAKIASALKAERLILLTDVPGVMKDPKDISTLISTLRLHQIPKLCLEGIIKGGMIPKIDCCVEAIRMGVEKATILDGRVPHSILLELFSNEGIGTMIY.

Substrate-binding positions include 64 to 65, R86, and N181; that span reads GG.

The protein belongs to the acetylglutamate kinase family. ArgB subfamily.

It is found in the cytoplasm. The enzyme catalyses N-acetyl-L-glutamate + ATP = N-acetyl-L-glutamyl 5-phosphate + ADP. It participates in amino-acid biosynthesis; L-arginine biosynthesis; N(2)-acetyl-L-ornithine from L-glutamate: step 2/4. In terms of biological role, catalyzes the ATP-dependent phosphorylation of N-acetyl-L-glutamate. This is Acetylglutamate kinase from Clostridium beijerinckii (strain ATCC 51743 / NCIMB 8052) (Clostridium acetobutylicum).